We begin with the raw amino-acid sequence, 409 residues long: ATPase ASNA1 homolog (409 aa).

K21–T28 lines the ATP pocket. D62 is an active-site residue. Residues E303 and N330 each contribute to the ATP site. Zn(2+)-binding residues include C342 and C345.

Belongs to the arsA ATPase family. Homodimer.

It is found in the cytoplasm. Its subcellular location is the endoplasmic reticulum. In terms of biological role, ATPase required for the post-translational delivery of tail-anchored (TA) proteins to the endoplasmic reticulum. Recognizes and selectively binds the transmembrane domain of TA proteins in the cytosol. This complex then targets to the endoplasmic reticulum by membrane-bound receptors, where the tail-anchored protein is released for insertion. This process is regulated by ATP binding and hydrolysis. ATP binding drives the homodimer towards the closed dimer state, facilitating recognition of newly synthesized TA membrane proteins. ATP hydrolysis is required for insertion. Subsequently, the homodimer reverts towards the open dimer state, lowering its affinity for the membrane-bound receptor, and returning it to the cytosol to initiate a new round of targeting. The protein is ATPase ASNA1 homolog of Leishmania major.